The sequence spans 468 residues: MKHRIQHIHFVGVGGSGMSGIAEVLLNLGYTVSGSDLSESTVTRRLADLGLKVSIGHAAENVADADAIVTSTAVAGDNPEVIAARLARIPVVPRAVMLAELMRLKRGIAVAGTHGKTTTTSLVASVLAAGGLDPTFVIGGRLNSAGANAQLGQGEFIVVEADESDASFLNLLPVMAIITNIDADHMDTYGHDVARLKSAFIEFTQRLPFYGSAVLCADDANVREIMPFVSRPITTYGLSSDAQVRAENVQADGTRMRFSVRRQGREQDLPTLEVELNLPGLHNVRNALAAIAVASELGVADAAICQALAGFKGVGRRFTQWGEFPVAEAQGGGRYSVIDDYGHHPVEMAATLAAARGAWPDRRIVLAFQPHRYTRTRDCFEDFVRVLGTADAVLLTEVYAAGEAPLVAADGRALARALRVAGKVEPLFVEDVAALPQAVRDFMRDGDVLILMGAGSISKVPSQLGEHA.

G112 to T118 provides a ligand contact to ATP.

Belongs to the MurCDEF family.

Its subcellular location is the cytoplasm. The catalysed reaction is UDP-N-acetyl-alpha-D-muramate + L-alanine + ATP = UDP-N-acetyl-alpha-D-muramoyl-L-alanine + ADP + phosphate + H(+). It functions in the pathway cell wall biogenesis; peptidoglycan biosynthesis. Functionally, cell wall formation. This Bordetella avium (strain 197N) protein is UDP-N-acetylmuramate--L-alanine ligase.